The following is a 296-amino-acid chain: Nucleotide-binding protein Pnec_1620 (296 aa).

An ATP-binding site is contributed by Gly8–Ser15. Asp57–Arg60 is a binding site for GTP.

Belongs to the RapZ-like family.

Functionally, displays ATPase and GTPase activities. This is Nucleotide-binding protein Pnec_1620 from Polynucleobacter necessarius subsp. necessarius (strain STIR1).